The following is a 303-amino-acid chain: Sulfate adenylyltransferase subunit 2 (303 aa).

Belongs to the PAPS reductase family. CysD subfamily. In terms of assembly, heterodimer composed of CysD, the smaller subunit, and CysN.

The catalysed reaction is sulfate + ATP + H(+) = adenosine 5'-phosphosulfate + diphosphate. The protein operates within sulfur metabolism; hydrogen sulfide biosynthesis; sulfite from sulfate: step 1/3. Its function is as follows. With CysN forms the ATP sulfurylase (ATPS) that catalyzes the adenylation of sulfate producing adenosine 5'-phosphosulfate (APS) and diphosphate, the first enzymatic step in sulfur assimilation pathway. APS synthesis involves the formation of a high-energy phosphoric-sulfuric acid anhydride bond driven by GTP hydrolysis by CysN coupled to ATP hydrolysis by CysD. This Sulfurovum sp. (strain NBC37-1) protein is Sulfate adenylyltransferase subunit 2.